Consider the following 294-residue polypeptide: Casein kinase II subunit beta (294 aa).

2 disordered regions span residues 66–90 (DHNTDNTTTNTSNNNDSRNGTSKRN) and 269–294 (KRMEEDDEEEEDEVEEEDDDRTMASE). Low complexity predominate over residues 70 to 87 (DNTTTNTSNNNDSRNGTS). The span at 273–288 (EDDEEEEDEVEEEDDD) shows a compositional bias: acidic residues.

This sequence belongs to the casein kinase 2 subunit beta family. In terms of assembly, tetramer composed of two alpha chains, one beta chain and one beta' chain. Post-translationally, phosphorylated by alpha subunit.

Regulatory subunit of casein kinase II/CK2. As part of the kinase complex regulates the basal catalytic activity of the alpha subunit a constitutively active serine/threonine-protein kinase that phosphorylates a large number of substrates containing acidic residues C-terminal to the phosphorylated serine or threonine. This chain is Casein kinase II subunit beta (CKB1), found in Candida albicans (Yeast).